Here is a 290-residue protein sequence, read N- to C-terminus: Shikimate dehydrogenase (NADP(+)) (290 aa).

Shikimate is bound by residues 18 to 20 (SYS) and Thr66. Catalysis depends on Lys70, which acts as the Proton acceptor. Residues Asn91 and Asp106 each contribute to the shikimate site. NADP(+) is bound by residues 130-134 (GNGGA) and Met230. Tyr232 contacts shikimate. Gly253 is an NADP(+) binding site.

It belongs to the shikimate dehydrogenase family. As to quaternary structure, homodimer.

The catalysed reaction is shikimate + NADP(+) = 3-dehydroshikimate + NADPH + H(+). Its pathway is metabolic intermediate biosynthesis; chorismate biosynthesis; chorismate from D-erythrose 4-phosphate and phosphoenolpyruvate: step 4/7. Involved in the biosynthesis of the chorismate, which leads to the biosynthesis of aromatic amino acids. Catalyzes the reversible NADPH linked reduction of 3-dehydroshikimate (DHSA) to yield shikimate (SA). This Prosthecochloris aestuarii (strain DSM 271 / SK 413) protein is Shikimate dehydrogenase (NADP(+)).